We begin with the raw amino-acid sequence, 390 residues long: Phosphoglycerate kinase (390 aa).

Residues 21–23, arginine 36, 59–62, arginine 113, and arginine 146 contribute to the substrate site; these read DMN and HLGR. Residues lysine 197, glutamate 319, and 345–348 each bind ATP; that span reads GGDT.

This sequence belongs to the phosphoglycerate kinase family. Monomer.

It localises to the cytoplasm. The catalysed reaction is (2R)-3-phosphoglycerate + ATP = (2R)-3-phospho-glyceroyl phosphate + ADP. The protein operates within carbohydrate degradation; glycolysis; pyruvate from D-glyceraldehyde 3-phosphate: step 2/5. The sequence is that of Phosphoglycerate kinase from Laribacter hongkongensis (strain HLHK9).